The primary structure comprises 230 residues: Probable caffeoyl-CoA O-methyltransferase 1 (230 aa).

S-adenosyl-L-methionine-binding positions include threonine 52, aspartate 74, 76-77 (GV), serine 82, aspartate 100, alanine 129, aspartate 151, aspartate 153, and tyrosine 160. Aspartate 151 contacts a divalent metal cation. 2 residues coordinate a divalent metal cation: aspartate 177 and asparagine 178.

Belongs to the class I-like SAM-binding methyltransferase superfamily. Cation-dependent O-methyltransferase family. CCoAMT subfamily.

It catalyses the reaction (E)-caffeoyl-CoA + S-adenosyl-L-methionine = (E)-feruloyl-CoA + S-adenosyl-L-homocysteine + H(+). The protein is Probable caffeoyl-CoA O-methyltransferase 1 (omt5) of Dictyostelium discoideum (Social amoeba).